The chain runs to 473 residues: Photosystem II CP43 reaction center protein (473 aa).

The propeptide occupies 1-14 (MKILYSLRRFYHVE). An N-acetylthreonine modification is found at Thr-15. Phosphothreonine is present on Thr-15. A run of 5 helical transmembrane segments spans residues 69–93 (LFEV…PHLA), 134–155 (LLGP…KDRN), 178–200 (KALY…RKIT), 255–275 (KPFA…LSYS), and 291–312 (WFNN…ASQA). Glu-367 is a [CaMn4O5] cluster binding site. A helical transmembrane segment spans residues 447–471 (RARAAAAGFEKGIDRDLEPVLYMTP).

This sequence belongs to the PsbB/PsbC family. PsbC subfamily. In terms of assembly, PSII is composed of 1 copy each of membrane proteins PsbA, PsbB, PsbC, PsbD, PsbE, PsbF, PsbH, PsbI, PsbJ, PsbK, PsbL, PsbM, PsbT, PsbX, PsbY, PsbZ, Psb30/Ycf12, at least 3 peripheral proteins of the oxygen-evolving complex and a large number of cofactors. It forms dimeric complexes. Requires Binds multiple chlorophylls and provides some of the ligands for the Ca-4Mn-5O cluster of the oxygen-evolving complex. It may also provide a ligand for a Cl- that is required for oxygen evolution. PSII binds additional chlorophylls, carotenoids and specific lipids. as cofactor.

The protein resides in the plastid. Its subcellular location is the chloroplast thylakoid membrane. Its function is as follows. One of the components of the core complex of photosystem II (PSII). It binds chlorophyll and helps catalyze the primary light-induced photochemical processes of PSII. PSII is a light-driven water:plastoquinone oxidoreductase, using light energy to abstract electrons from H(2)O, generating O(2) and a proton gradient subsequently used for ATP formation. The chain is Photosystem II CP43 reaction center protein from Oryza nivara (Indian wild rice).